The chain runs to 282 residues: Sulfur carrier protein FdhD (282 aa).

The Cysteine persulfide intermediate role is filled by Cys126. A Mo-bis(molybdopterin guanine dinucleotide)-binding site is contributed by 265–270 (FVRNNR).

This sequence belongs to the FdhD family.

It is found in the cytoplasm. In terms of biological role, required for formate dehydrogenase (FDH) activity. Acts as a sulfur carrier protein that transfers sulfur from IscS to the molybdenum cofactor prior to its insertion into FDH. The chain is Sulfur carrier protein FdhD from Thermoplasma acidophilum (strain ATCC 25905 / DSM 1728 / JCM 9062 / NBRC 15155 / AMRC-C165).